A 192-amino-acid chain; its full sequence is Xanthine phosphoribosyltransferase (192 aa).

Xanthine-binding residues include leucine 20 and asparagine 27. 128–132 serves as a coordination point for 5-phospho-alpha-D-ribose 1-diphosphate; that stretch reads ANGQA. Position 156 (lysine 156) interacts with xanthine.

This sequence belongs to the purine/pyrimidine phosphoribosyltransferase family. Xpt subfamily. In terms of assembly, homodimer.

It is found in the cytoplasm. It catalyses the reaction XMP + diphosphate = xanthine + 5-phospho-alpha-D-ribose 1-diphosphate. It functions in the pathway purine metabolism; XMP biosynthesis via salvage pathway; XMP from xanthine: step 1/1. Functionally, converts the preformed base xanthine, a product of nucleic acid breakdown, to xanthosine 5'-monophosphate (XMP), so it can be reused for RNA or DNA synthesis. The polypeptide is Xanthine phosphoribosyltransferase (Listeria monocytogenes serotype 4b (strain CLIP80459)).